The following is a 156-amino-acid chain: MENEKNYRPNVAAIVLSSSYPFECKIFIAKRSDMDNIWQFPQGGIDKGESVKNALFRELKEEIGTDEVEIIAEYPEWLSYDFPSKIVKKMYPYDGQIQKYFLVRLKHGATININTKHPEFDDYQFVSVKQIFEMINHFKKNIYVKVIKYFEEKGYI.

One can recognise a Nudix hydrolase domain in the interval 6 to 148 (NYRPNVAAIV…KKNIYVKVIK (143 aa)). A Nudix box motif is present at residues 43-64 (GGIDKGESVKNALFRELKEEIG).

Belongs to the Nudix hydrolase family. RppH subfamily. A divalent metal cation serves as cofactor.

In terms of biological role, accelerates the degradation of transcripts by removing pyrophosphate from the 5'-end of triphosphorylated RNA, leading to a more labile monophosphorylated state that can stimulate subsequent ribonuclease cleavage. In Campylobacter jejuni subsp. jejuni serotype O:6 (strain 81116 / NCTC 11828), this protein is RNA pyrophosphohydrolase.